Consider the following 212-residue polypeptide: Ribonuclease HII (212 aa).

The 205-residue stretch at 2–206 folds into the RNase H type-2 domain; it reads TPLVGVDEAG…CERIRAEAEQ (205 aa). A divalent metal cation is bound by residues Asp-8, Glu-9, and Asp-101.

The protein belongs to the RNase HII family. Mn(2+) is required as a cofactor. The cofactor is Mg(2+).

It is found in the cytoplasm. The catalysed reaction is Endonucleolytic cleavage to 5'-phosphomonoester.. Endonuclease that specifically degrades the RNA of RNA-DNA hybrids. This is Ribonuclease HII from Natronomonas pharaonis (strain ATCC 35678 / DSM 2160 / CIP 103997 / JCM 8858 / NBRC 14720 / NCIMB 2260 / Gabara) (Halobacterium pharaonis).